A 708-amino-acid polypeptide reads, in one-letter code: Metal-pseudopaline receptor CntO (708 aa).

The N-terminal stretch at Met1–Trp21 is a signal peptide. In terms of domain architecture, TBDR plug spans Arg63 to Lys169. Positions Glu174–Tyr708 constitute a TBDR beta-barrel domain.

It belongs to the TonB-dependent receptor family.

Its subcellular location is the cell outer membrane. Transports the metallophore pseudopaline, which is involved in the acquisition of nickel and zinc, and thus enables bacterial growth inside the host, where metal access is limited. Is probably involved in the import of pseudopaline-metal complexes. This Pseudomonas aeruginosa (strain ATCC 15692 / DSM 22644 / CIP 104116 / JCM 14847 / LMG 12228 / 1C / PRS 101 / PAO1) protein is Metal-pseudopaline receptor CntO.